The sequence spans 419 residues: uncharacterized protein (419 aa).

This is an uncharacterized protein from Acinetobacter baylyi (strain ATCC 33305 / BD413 / ADP1).